The sequence spans 761 residues: Neurotrypsin (761 aa).

The N-terminal stretch at Met1 to Ala21 is a signal peptide. The interval Ser25–Ala87 is disordered. Over residues Arg38–Ser48 the composition is skewed to low complexity. One can recognise a Kringle domain in the interval Cys85–Cys157. 17 disulfides stabilise this stretch: Cys85–Cys157, Cys101–Cys141, Cys130–Cys155, Cys191–Cys255, Cys204–Cys265, Cys235–Cys245, Cys298–Cys361, Cys311–Cys371, Cys341–Cys351, Cys411–Cys475, Cys424–Cys485, Cys455–Cys465, Cys505–Cys636, Cys547–Cys563, Cys651–Cys717, Cys680–Cys694, and Cys707–Cys736. Residue Asn93 is glycosylated (N-linked (GlcNAc...) asparagine). 3 consecutive SRCR domains span residues Ile166 to Pro267, Ile273 to Pro373, and Ile386 to Tyr487. The zymogen activation region stretch occupies residues Cys505 to Arg516. A Peptidase S1 domain is found at Ile517 to Ser760. Asn521 carries an N-linked (GlcNAc...) asparagine glycan. Residue His562 is the Charge relay system of the active site. Asn569 carries N-linked (GlcNAc...) asparagine glycosylation. Asp612 acts as the Charge relay system in catalysis. The Charge relay system role is filled by Ser711.

This sequence belongs to the peptidase S1 family. As to expression, most abundant in cerebral cortex, hippocampus and amygdala.

It localises to the secreted. In terms of biological role, plays a role in neuronal plasticity and the proteolytic action may subserve structural reorganizations associated with learning and memory operations. The sequence is that of Neurotrypsin (Prss12) from Mus musculus (Mouse).